The chain runs to 285 residues: Bifunctional protein FolD (285 aa).

NADP(+) is bound by residues 166–168 (GAS) and Ile232.

It belongs to the tetrahydrofolate dehydrogenase/cyclohydrolase family. Homodimer.

The enzyme catalyses (6R)-5,10-methylene-5,6,7,8-tetrahydrofolate + NADP(+) = (6R)-5,10-methenyltetrahydrofolate + NADPH. It carries out the reaction (6R)-5,10-methenyltetrahydrofolate + H2O = (6R)-10-formyltetrahydrofolate + H(+). Its pathway is one-carbon metabolism; tetrahydrofolate interconversion. Its activity is regulated as follows. The NAD(+)-dependent dehydrogenase is activated by inorganic phosphate. Its function is as follows. Catalyzes the oxidation of 5,10-methylenetetrahydrofolate to 5,10-methenyltetrahydrofolate and then the hydrolysis of 5,10-methenyltetrahydrofolate to 10-formyltetrahydrofolate. The chain is Bifunctional protein FolD from Photobacterium phosphoreum.